The following is a 2012-amino-acid chain: Cell adhesion molecule DSCAM (2012 aa).

A signal peptide spans 1–17 (MWILALSLFQSFANVFS). Topologically, residues 18 to 1595 (EDLHSSLYFV…GLTTNEGLKM (1578 aa)) are extracellular. N-linked (GlcNAc...) asparagine glycans are attached at residues asparagine 28 and asparagine 78. Ig-like C2-type domains are found at residues 39–129 (TTGT…YTVR), 125–216 (PYTV…ARLF), 225–305 (PSIL…AKVI), 313–401 (PLKA…VQVV), 407–500 (PKII…ARIN), 504–592 (PASI…VHVT), 596–685 (PPFI…SQLI), 690–783 (PKFV…MYLT), and 787–883 (PAMI…LTVQ). Cystine bridges form between cysteine 46-cysteine 102, cysteine 145-cysteine 197, cysteine 246-cysteine 293, cysteine 335-cysteine 385, and cysteine 428-cysteine 484. Residues asparagine 470, asparagine 487, asparagine 512, asparagine 556, asparagine 658, asparagine 666, asparagine 710, asparagine 748, and asparagine 795 are each glycosylated (N-linked (GlcNAc...) asparagine). 2 cysteine pairs are disulfide-bonded: cysteine 525–cysteine 575 and cysteine 617–cysteine 669. A disulfide bond links cysteine 711 and cysteine 766. Residues cysteine 809 and cysteine 865 are joined by a disulfide bond. Fibronectin type-III domains are found at residues 885-982 (PPDP…ADEA), 987-1086 (PPQE…TLED), 1091-1187 (PPEN…TKED), and 1191-1285 (PPAG…AKAP). Asparagine 924 carries N-linked (GlcNAc...) asparagine glycosylation. N-linked (GlcNAc...) asparagine glycans are attached at residues asparagine 1142, asparagine 1160, asparagine 1250, asparagine 1271, and asparagine 1341. In terms of domain architecture, Ig-like C2-type 10 spans 1285–1377 (PARILTFSGT…DEIILNLQVQ (93 aa)). A disulfide bond links cysteine 1307 and cysteine 1359. 2 Fibronectin type-III domains span residues 1379 to 1473 (PPDQ…TLGK) and 1474 to 1575 (EPQF…TIPP). Asparagine 1488 is a glycosylation site (N-linked (GlcNAc...) asparagine). Residues 1596-1616 (LVTISCILVGVLLLFVLLLVV) traverse the membrane as a helical segment. Residues 1617–2012 (RRRRREQRLK…NPYAKSYTLV (396 aa)) lie on the Cytoplasmic side of the membrane. Positions 1617–2012 (RRRRREQRLK…NPYAKSYTLV (396 aa)) are required for netrin-mediated axon repulsion of neuronal growth cones. Disordered regions lie at residues 1718 to 1810 (LVDV…ASST), 1855 to 1883 (TDSL…DGGR), and 1971 to 2012 (LPQR…YTLV). A compositionally biased stretch (low complexity) spans 1799–1809 (SSMVSTESASS). The segment covering 1855–1865 (TDSLTSSTPSE) has biased composition (polar residues).

In terms of assembly, homodimer; mediates homophilic interactions to promote cell adhesion. Interacts with DCC; the interaction is abolished in response to NTN1. Interacts (via extracellular domain) with NTN1. Interacts (via extracellular domain) with UNC5C (via Ig-like C2-type domain). Interacts with PTK2. Interacts with FYN. Phosphorylated at tyrosine residues. Phosphorylation is enhanced by NTN1. Primarily expressed in brain.

It localises to the secreted. The protein localises to the cell membrane. It is found in the cell projection. Its subcellular location is the axon. The protein resides in the dendrite. It localises to the growth cone. The protein localises to the synapse. Functionally, cell adhesion molecule that plays a role in neuronal self-avoidance. Promotes repulsion between specific neuronal processes of either the same cell or the same subtype of cells. Mediates within retinal amacrine and ganglion cell subtypes both isoneuronal self-avoidance for creating an orderly dendritic arborization and heteroneuronal self-avoidance to maintain the mosaic spacing between amacrine and ganglion cell bodies. Receptor for netrin required for axon guidance independently of and in collaboration with the receptor DCC. Might also collaborate with UNC5C in NTN1-mediated axon repulsion independently of DCC. In spinal cord development plays a role in guiding commissural axons projection and pathfinding across the ventral midline to reach the floor plate upon ligand binding. Mediates intracellular signaling by stimulating the activation of MAPK8 and MAP kinase p38. Adhesion molecule that promotes lamina-specific synaptic connections in the retina: expressed in specific subsets of interneurons and retinal ganglion cells (RGCs) and promotes synaptic connectivity via homophilic interactions. This is Cell adhesion molecule DSCAM (DSCAM) from Homo sapiens (Human).